Reading from the N-terminus, the 438-residue chain is Aspartate--tRNA(Asp/Asn) ligase (438 aa).

Residue glutamate 176 coordinates L-aspartate. The interval 198–201 (QLYK) is aspartate. Arginine 220 contributes to the L-aspartate binding site. ATP contacts are provided by residues 220 to 222 (RAE), 228 to 230 (RHL), and glutamate 361. 2 residues coordinate Mg(2+): glutamate 361 and serine 364. Positions 364 and 368 each coordinate L-aspartate. Residue 409–412 (GADR) coordinates ATP.

It belongs to the class-II aminoacyl-tRNA synthetase family. Type 2 subfamily. As to quaternary structure, homodimer. The cofactor is Mg(2+).

The protein resides in the cytoplasm. The catalysed reaction is tRNA(Asx) + L-aspartate + ATP = L-aspartyl-tRNA(Asx) + AMP + diphosphate. In terms of biological role, aspartyl-tRNA synthetase with relaxed tRNA specificity since it is able to aspartylate not only its cognate tRNA(Asp) but also tRNA(Asn). Reaction proceeds in two steps: L-aspartate is first activated by ATP to form Asp-AMP and then transferred to the acceptor end of tRNA(Asp/Asn). The sequence is that of Aspartate--tRNA(Asp/Asn) ligase from Methanococcus maripaludis (strain C5 / ATCC BAA-1333).